The sequence spans 95 residues: DNA-directed RNA polymerase subunit Rpo11 (95 aa).

Belongs to the archaeal Rpo11/eukaryotic RPB11/RPC19 RNA polymerase subunit family. Part of the RNA polymerase complex.

Its subcellular location is the cytoplasm. The enzyme catalyses RNA(n) + a ribonucleoside 5'-triphosphate = RNA(n+1) + diphosphate. Its function is as follows. DNA-dependent RNA polymerase (RNAP) catalyzes the transcription of DNA into RNA using the four ribonucleoside triphosphates as substrates. The sequence is that of DNA-directed RNA polymerase subunit Rpo11 from Pyrococcus furiosus (strain ATCC 43587 / DSM 3638 / JCM 8422 / Vc1).